Reading from the N-terminus, the 190-residue chain is 3-isopropylmalate dehydratase small subunit (190 aa).

Belongs to the LeuD family. LeuD type 1 subfamily. As to quaternary structure, heterodimer of LeuC and LeuD.

The catalysed reaction is (2R,3S)-3-isopropylmalate = (2S)-2-isopropylmalate. Its pathway is amino-acid biosynthesis; L-leucine biosynthesis; L-leucine from 3-methyl-2-oxobutanoate: step 2/4. Its function is as follows. Catalyzes the isomerization between 2-isopropylmalate and 3-isopropylmalate, via the formation of 2-isopropylmaleate. This Staphylococcus aureus (strain MRSA252) protein is 3-isopropylmalate dehydratase small subunit.